Reading from the N-terminus, the 86-residue chain is Exodeoxyribonuclease 7 small subunit (86 aa).

Belongs to the XseB family. Heterooligomer composed of large and small subunits.

The protein localises to the cytoplasm. It carries out the reaction Exonucleolytic cleavage in either 5'- to 3'- or 3'- to 5'-direction to yield nucleoside 5'-phosphates.. Functionally, bidirectionally degrades single-stranded DNA into large acid-insoluble oligonucleotides, which are then degraded further into small acid-soluble oligonucleotides. This is Exodeoxyribonuclease 7 small subunit from Agrobacterium fabrum (strain C58 / ATCC 33970) (Agrobacterium tumefaciens (strain C58)).